We begin with the raw amino-acid sequence, 362 residues long: sn-glycerol-3-phosphate import ATP-binding protein UgpC (362 aa).

In terms of domain architecture, ABC transporter spans Leu-4–Ile-235. Gly-37–Ser-44 contributes to the ATP binding site.

Belongs to the ABC transporter superfamily. sn-glycerol-3-phosphate importer (TC 3.A.1.1.3) family. As to quaternary structure, the complex is composed of two ATP-binding proteins (UgpC), two transmembrane proteins (UgpA and UgpE) and a solute-binding protein (UgpB).

The protein resides in the cell inner membrane. It carries out the reaction sn-glycerol 3-phosphate(out) + ATP + H2O = sn-glycerol 3-phosphate(in) + ADP + phosphate + H(+). In terms of biological role, part of the ABC transporter complex UgpBAEC involved in sn-glycerol-3-phosphate (G3P) import. Responsible for energy coupling to the transport system. This Bordetella pertussis (strain Tohama I / ATCC BAA-589 / NCTC 13251) protein is sn-glycerol-3-phosphate import ATP-binding protein UgpC.